Consider the following 348-residue polypeptide: MSSSQDKANLPANNSRARAKKLVLELQDEICAGLETIDGEGKFLEESWERPEGGGGRSRVLKDGKIFEQGGVNFSEVHGNELPPSIISQRPEAKGHSWFATGTSMVLHPKNPYIPTVHLNYRYFEAGPVWWFGGGADLTPFYPYLSDTRHFHSCHKNACDTIDKDLHKVFKPWCDEYFFLKHRNETRGVGGIFYDYQDGSGLLYKGQNANGKASKIAKELGEYSLNWENLFSLAKACGQAFLPSYEPIIKKRKNQSFSTKERDFQLYRRGRYAEFNLVWDRGTIFGLQTNGRTESILMSLPPLARWEYGYKPEENSREALLTDLFTKPQDWFTDKSLEKRCLTHQALD.

Ser104 contacts substrate. A divalent metal cation-binding residues include His108 and His118. Catalysis depends on His118, which acts as the Proton donor. 120-122 (NYR) contacts substrate. Residues His152 and His182 each coordinate a divalent metal cation. The segment at 272–307 (YAEFNLVWDRGTIFGLQTNGRTESILMSLPPLARWE) is important for dimerization.

It belongs to the aerobic coproporphyrinogen-III oxidase family. As to quaternary structure, homodimer. The cofactor is a divalent metal cation.

The protein localises to the cytoplasm. It catalyses the reaction coproporphyrinogen III + O2 + 2 H(+) = protoporphyrinogen IX + 2 CO2 + 2 H2O. It functions in the pathway porphyrin-containing compound metabolism; protoporphyrin-IX biosynthesis; protoporphyrinogen-IX from coproporphyrinogen-III (O2 route): step 1/1. Functionally, involved in the heme and chlorophyll biosynthesis. Catalyzes the aerobic oxidative decarboxylation of propionate groups of rings A and B of coproporphyrinogen-III to yield the vinyl groups in protoporphyrinogen-IX. The polypeptide is Oxygen-dependent coproporphyrinogen-III oxidase (Prochlorococcus marinus (strain NATL1A)).